The sequence spans 481 residues: DNA primase DnaG (481 aa).

Residues 169–243 (DAILVVEGRA…DVDYVARAPD (75 aa)) form the Toprim domain. Positions 175, 217, and 219 each coordinate Mg(2+). The tract at residues 275 to 393 (RRRNKLAAQA…ARKEREPSEF (119 aa)) is disordered. Over residues 281–309 (AAQAAEKQAQAEAAQKAEAPAAAAPVQPQ) the composition is skewed to low complexity. The span at 312–393 (YQQKEYPQRE…ARKEREPSEF (82 aa)) shows a compositional bias: basic and acidic residues.

It belongs to the archaeal DnaG primase family. In terms of assembly, forms a ternary complex with MCM helicase and DNA. Component of the archaeal exosome complex. The cofactor is Mg(2+).

It carries out the reaction ssDNA + n NTP = ssDNA/pppN(pN)n-1 hybrid + (n-1) diphosphate.. RNA polymerase that catalyzes the synthesis of short RNA molecules used as primers for DNA polymerase during DNA replication. Also part of the exosome, which is a complex involved in RNA degradation. Acts as a poly(A)-binding protein that enhances the interaction between heteromeric, adenine-rich transcripts and the exosome. The sequence is that of DNA primase DnaG from Methanocella arvoryzae (strain DSM 22066 / NBRC 105507 / MRE50).